The sequence spans 296 residues: 4-hydroxybenzoate octaprenyltransferase (296 aa).

8 helical membrane passes run 29–49, 52–72, 103–123, 151–171, 176–196, 220–240, 243–263, and 275–295; these read AGWL…AGGF, WHLL…GCCI, LVLG…TNAI, VLGV…LGEV, WLLM…YAMV, VILL…MPYV, ALFT…YTLI, and FRLN…SYAL.

Belongs to the UbiA prenyltransferase family. Mg(2+) is required as a cofactor.

The protein localises to the cell inner membrane. It carries out the reaction all-trans-octaprenyl diphosphate + 4-hydroxybenzoate = 4-hydroxy-3-(all-trans-octaprenyl)benzoate + diphosphate. The protein operates within cofactor biosynthesis; ubiquinone biosynthesis. In terms of biological role, catalyzes the prenylation of para-hydroxybenzoate (PHB) with an all-trans polyprenyl group. Mediates the second step in the final reaction sequence of ubiquinone-8 (UQ-8) biosynthesis, which is the condensation of the polyisoprenoid side chain with PHB, generating the first membrane-bound Q intermediate 3-octaprenyl-4-hydroxybenzoate. This chain is 4-hydroxybenzoate octaprenyltransferase, found in Albidiferax ferrireducens (strain ATCC BAA-621 / DSM 15236 / T118) (Rhodoferax ferrireducens).